The following is a 1222-amino-acid chain: MLEYYDDDAYVYDDDDEDAPITAEDSWTVISAFFREKGLVSQQLDSFNQFINYTIQDLILEDSTLILEQLAQHTTEADNISRKYEISFGKIYLAKPSMTESDGVSHAMYPQEARLRNLTYASGLFVEIKKRTYEAVDIPGRDLKYEIIQEESEDTEEGKIFIGRVPIMLRSKYCLLDDLSESDLYRLKECPFDMGGYFIINGSEKVLIAQERSAGNIVQVFKKSAPSPISHIAEIRSALEKGSRFISTLQVKLYGREGSTSRTIKATLPYIKQDIPIVIIFRALGIIPDGEILEHICYDQNDWQMLEMLKPCVEEGFVIQDRETALDFIGRRGTALGIKKEKRIQYAKDILQKEFLPHITQLEGFESRKAFFLGYMINRLLLCALDRKDQDDRDHFGKKRLDLAGPLLAQLFKTLFRKLTRDILRFMQRSVEEAKDFNLKLAVKATTITAGLKYALATGNWGEQKKAMSSRAGVSQVLNRYTYSSTLSHLRRTNTPIGRDGKLAKPRQLHNTHWGLVCPAETPEGQACGLVKNLSLMSCISVGTDPVPIITFLNEWGMEPLEDYVPHQSPDATRVFVNGVWHGIHRNPARLVDTIRKLRRKGDITAEVSIVRDIREKELKIFTDAGRVYRPLFVVADTQHADGHKDLKVRKGHIRKLMLTEYQDIEGGFEDEDINYTWTSLLNDGIVEYIDAEEEETILIAMQQEDLDPSVPQTVDPSDELDPARRIKAIHHSNTFTHCEIHPSMILGVAASVIPFPDHNQSPRNTYQSAMGKQAMGVFLTNYNVRMDTMANILYYPQKPLGTTRAMEYLKFRELPAGQNAIVAIACYSGYNQEDSMIMNQSSIDSGLFRSLFFRSYMDQEKRIGMSITESFEKPHRTNTLRMKHGTYEKLDDDGLIAPGVRVSGDDIIIGKTTPIPPDAEELGQRTAFHSKRDASTPLRSTENGIVDQVLITTNQEGLKFVKVRVRTTKVPQIGDKFASRHGQKGTIGITYRREDMPFTAEGVVPDLIINPHAIPSRMTVAHLIECLLSKVAALSGNEGDASPFTDITVDGISKLLREHGYQSRGFEVMYNGHTGKKLMAQIFFGPTYYQRLRHMVDDKIHARARGPMQVLTRQPVEGRSRDGGLRFGEMERDCMIAHGAAAFLKERLMEASDAFRVHICGICGLMTVVAKLKHNQFECRGCKNKIDIYQVHIPYAAKLLFQELMAMNIAPRLYTDRSRDF.

Asp-835 provides a ligand contact to Mg(2+). Positions 1161, 1164, 1180, and 1183 each coordinate Zn(2+). The segment at 1161 to 1183 (CGICGLMTVVAKLKHNQFECRGC) adopts a C4-type zinc-finger fold.

It belongs to the RNA polymerase beta chain family. In terms of assembly, component of the RNA polymerase II (Pol II) complex consisting of 12 subunits.

The protein localises to the nucleus. It catalyses the reaction RNA(n) + a ribonucleoside 5'-triphosphate = RNA(n+1) + diphosphate. DNA-dependent RNA polymerase catalyzes the transcription of DNA into RNA using the four ribonucleoside triphosphates as substrates. Second largest component of RNA polymerase II which synthesizes mRNA precursors and many functional non-coding RNAs. Proposed to contribute to the polymerase catalytic activity and forms the polymerase active center together with the largest subunit. Pol II is the central component of the basal RNA polymerase II transcription machinery. It is composed of mobile elements that move relative to each other. RPB2 is part of the core element with the central large cleft, the clamp element that moves to open and close the cleft and the jaws that are thought to grab the incoming DNA template. This Eremothecium gossypii (strain ATCC 10895 / CBS 109.51 / FGSC 9923 / NRRL Y-1056) (Yeast) protein is DNA-directed RNA polymerase II subunit RPB2 (RPB2).